The chain runs to 447 residues: N-succinylarginine dihydrolase (447 aa).

Residues 19–28 (AGLSFGNEAS), Asn110, and 137–138 (HR) contribute to the substrate site. Glu174 is an active-site residue. Position 213 (Arg213) interacts with substrate. His249 is a catalytic residue. Substrate contacts are provided by Asp251 and Asn364. Residue Cys370 is the Nucleophile of the active site.

Belongs to the succinylarginine dihydrolase family. Homodimer.

It carries out the reaction N(2)-succinyl-L-arginine + 2 H2O + 2 H(+) = N(2)-succinyl-L-ornithine + 2 NH4(+) + CO2. Its pathway is amino-acid degradation; L-arginine degradation via AST pathway; L-glutamate and succinate from L-arginine: step 2/5. Catalyzes the hydrolysis of N(2)-succinylarginine into N(2)-succinylornithine, ammonia and CO(2). The protein is N-succinylarginine dihydrolase of Yersinia pestis bv. Antiqua (strain Antiqua).